Reading from the N-terminus, the 64-residue chain is Large ribosomal subunit protein bL35 (64 aa).

The protein belongs to the bacterial ribosomal protein bL35 family.

This is Large ribosomal subunit protein bL35 from Vibrio campbellii (strain ATCC BAA-1116).